Consider the following 530-residue polypeptide: Na(+)/H(+) antiporter NhaB (530 aa).

12 helical membrane passes run F13 to P33, L98 to F118, L123 to F145, L149 to Y166, L205 to P225, F238 to L258, I308 to L328, V330 to F350, F356 to F376, L393 to G413, A451 to I471, and I480 to F500.

The protein belongs to the NhaB Na(+)/H(+) (TC 2.A.34) antiporter family.

The protein localises to the cell inner membrane. It catalyses the reaction 2 Na(+)(in) + 3 H(+)(out) = 2 Na(+)(out) + 3 H(+)(in). In terms of biological role, na(+)/H(+) antiporter that extrudes sodium in exchange for external protons. The chain is Na(+)/H(+) antiporter NhaB from Vibrio atlanticus (strain LGP32) (Vibrio splendidus (strain Mel32)).